Consider the following 122-residue polypeptide: Small ribosomal subunit protein uS10y (122 aa).

This sequence belongs to the universal ribosomal protein uS10 family.

The protein is Small ribosomal subunit protein uS10y (RPS20B) of Arabidopsis thaliana (Mouse-ear cress).